A 503-amino-acid chain; its full sequence is MSKVTGKVAQIIGPVVDVVFDSENAELPKIYDSLEITRKDGSILVLEVQSHIGEQTVRTVSMDSTDGLSRGVDVLATGNPIQMPVGKDVYGRLFNVIGDAIDGLGNLPKAGEDGLPIHRQAPKFEDLSVSTEVLFTGIKVIDLIEPYSKGGKIGLFGGAGVGKTVLIQELINNIAKGHGGLSVFAGVGERTREGNDLLREMLESGIIKYGDDFMHSMEEGGWDLQKVDKEVMKESKATFVFGQMNEPPGARARVALSGLTIAEYFRDGAGEGQGKDVLFFVDNIFRFTQAGSEVSALLGRMPSAVGYQPTLATEMGAMQERITSTKNGSITSVQAVYVPADDLTDPAPATTFAHLDATTVLSRKIAELGIYPAVDPLDSTSRILTADILGDEHYDCAQRVKELLQRYKELQDIIAILGMEELSEEDKLAVSRARRVQRFLSQPFHVAEQFTGLKGVLVDIKDTIKGFNMIMDGELDKYPEAAFNLKGTIEEAIEAGEKMLAEN.

157 to 164 (GGAGVGKT) lines the ATP pocket.

This sequence belongs to the ATPase alpha/beta chains family. F-type ATPases have 2 components, CF(1) - the catalytic core - and CF(0) - the membrane proton channel. CF(1) has five subunits: alpha(3), beta(3), gamma(1), delta(1), epsilon(1). CF(0) has three main subunits: a(1), b(2) and c(9-12). The alpha and beta chains form an alternating ring which encloses part of the gamma chain. CF(1) is attached to CF(0) by a central stalk formed by the gamma and epsilon chains, while a peripheral stalk is formed by the delta and b chains.

It localises to the cell membrane. The catalysed reaction is ATP + H2O + 4 H(+)(in) = ADP + phosphate + 5 H(+)(out). Its function is as follows. Produces ATP from ADP in the presence of a proton gradient across the membrane. The catalytic sites are hosted primarily by the beta subunits. The chain is ATP synthase subunit beta from Christiangramia forsetii (strain DSM 17595 / CGMCC 1.15422 / KT0803) (Gramella forsetii).